A 544-amino-acid polypeptide reads, in one-letter code: Cytochrome P450 monooxygenase cle2 (544 aa).

A helical transmembrane segment spans residues leucine 19 to leucine 39. Residues arginine 273–glycine 305 are disordered. The span at serine 280 to lysine 290 shows a compositional bias: basic and acidic residues. Positions glutamate 291 to proline 304 are enriched in acidic residues. Cysteine 478 provides a ligand contact to heme.

This sequence belongs to the cytochrome P450 family. Heme serves as cofactor.

It localises to the membrane. It participates in secondary metabolite biosynthesis; terpenoid biosynthesis. Functionally, cytochrome P450 monooxygenase; part of the cluster A that mediates the biosynthesis of chevalone E and its oxidized derivatives that possess a unique five-membered lactone ring and can synergistically enhance the cytotoxicity of doxorubicin (DOX) in breast cancer cells. Within the pathway, cle2 is involved in hydroxylation of the chavalone E scaffold at position C-20 and contributes with cle4 to the production of seven oxidation derivatives. The molecular scaffold is commonly biosynthesized by a series of enzymes including the non-reducing polyketide synthase (NR-PKS) cle1 that produces the alpha-pyrone triacetic acid lactone (TAL); The membrane-bound prenyltransferase cle5 that accepts TAL as its substrate to perform a C-3 geranylgeranylation reaction, in which the pathway-dedicated GGPS cle6 is required to provide GGPP, the other substrate of cle5; the FAD-dependent monooxygenase Cle3 that forms an (S)-epoxide ring at the terminal olefin of the geranylgeranyl group; and the terpene cyclase Cle7 that catalyzes the cyclization of the prenyl group that yields the pentacyclic pathway intermediate chevalone E. Chevalone E can derivatize into seven new oxidized analogs by the cytochrome P450 monooxygenases cle2 (acting at C-20) and cle4 (acting at C-11 and C-12). The protein is Cytochrome P450 monooxygenase cle2 of Aspergillus versicolor.